Here is a 267-residue protein sequence, read N- to C-terminus: MLSHAELKQGFHYFMMGWHLITQKGLRRFVIMPILLNIVLLSGLFWLFITQIEKMIGMLMLSIPDWLSWLSSILLIFAILMILVLFYFVFTTLSGFIAAPFNGLLAEKVEKMLTGENLVEGSVWDFMKDIPRMLGREWQKLVYSLPKLIILFLLGFVPVLGQSVIPIIVTLFTAWMMAIQYCDYPFDNHKVPFFVMKAELAEKRALSLSFGGLVMLCTFIPLVNLVVIPVAVCGATAMWVTHFRDHLAMKPLNQEGVSRVSTVSIVK.

Helical transmembrane passes span Phe29–Ile49, Ile73–Leu93, Ile149–Val169, and Gly212–Val232.

It belongs to the CysZ family.

It localises to the cell inner membrane. In terms of biological role, high affinity, high specificity proton-dependent sulfate transporter, which mediates sulfate uptake. Provides the sulfur source for the cysteine synthesis pathway. This chain is Sulfate transporter CysZ, found in Pasteurella multocida (strain Pm70).